We begin with the raw amino-acid sequence, 187 residues long: NADPH-dependent 3-demethoxyubiquinone 3-hydroxylase, mitochondrial (187 aa).

A mitochondrion-targeting transit peptide spans 1–8; that stretch reads MFRVITRG. Lysine 21 lines the NADH pocket. Tandem repeats lie at residues 28-99 and 100-187. Positions 28–187 are 2 X approximate tandem repeats; sequence AGELGADRIY…KGAIAIAEKI (160 aa). Fe cation is bound by residues glutamate 30, glutamate 60, histidine 63, glutamate 112, glutamate 148, and histidine 151. Lysine 186 lines the NADH pocket.

This sequence belongs to the COQ7 family. In terms of assembly, component of a multi-subunit COQ enzyme complex. The cofactor is Fe cation.

Its subcellular location is the mitochondrion inner membrane. The protein resides in the mitochondrion. It localises to the nucleus. It catalyses the reaction a 5-methoxy-2-methyl-3-(all-trans-polyprenyl)benzoquinone + NADH + O2 = a 3-demethylubiquinone + NAD(+) + H2O. It functions in the pathway cofactor biosynthesis; ubiquinone biosynthesis. In terms of biological role, catalyzes the hydroxylation of the 5-methoxy-2-methyl-3-(all-trans-polyprenyl)benzoquinone at the C6 position and participates in the biosynthesis of ubiquinone. Catalyzes the reaction through a substrate-mediated reduction pathway, whereby NADH shuttles electrons to 5-methoxy-2-methyl-3-(all-trans-decaprenyl)benzoquinone, which then transfers the electrons to the two Fe(3+) centers. The binding of 5-methoxy-2-methyl-3-(all-trans-polyprenyl)benzoquinone (DMQn) mediates reduction of the diiron center by nicotinamide adenine dinucleotide (NADH) and initiates oxygen activation for subsequent DMQ hydroxylation. Also has a structural role in the COQ enzyme complex, stabilizing other COQ polypeptides. Involved in lifespan determination in a ubiquinone-independent manner. Plays a role in modulating mitochondrial stress responses, acting in the nucleus, perhaps via regulating gene expression, independent of its characterized mitochondrial function in ubiquinone biosynthesis. Plays a role in modulating polyribosome formation. The sequence is that of NADPH-dependent 3-demethoxyubiquinone 3-hydroxylase, mitochondrial from Caenorhabditis elegans.